Here is a 290-residue protein sequence, read N- to C-terminus: Ribosomal RNA small subunit methyltransferase A (290 aa).

Residues Asn28, Leu30, Gly55, Glu76, Asp102, and Asn126 each contribute to the S-adenosyl-L-methionine site.

This sequence belongs to the class I-like SAM-binding methyltransferase superfamily. rRNA adenine N(6)-methyltransferase family. RsmA subfamily.

The protein localises to the cytoplasm. It carries out the reaction adenosine(1518)/adenosine(1519) in 16S rRNA + 4 S-adenosyl-L-methionine = N(6)-dimethyladenosine(1518)/N(6)-dimethyladenosine(1519) in 16S rRNA + 4 S-adenosyl-L-homocysteine + 4 H(+). In terms of biological role, specifically dimethylates two adjacent adenosines (A1518 and A1519) in the loop of a conserved hairpin near the 3'-end of 16S rRNA in the 30S particle. May play a critical role in biogenesis of 30S subunits. This Lachnoclostridium phytofermentans (strain ATCC 700394 / DSM 18823 / ISDg) (Clostridium phytofermentans) protein is Ribosomal RNA small subunit methyltransferase A.